A 422-amino-acid chain; its full sequence is Tyrosine--tRNA ligase 1 (422 aa).

Y35 contributes to the L-tyrosine binding site. Residues P40–H49 carry the 'HIGH' region motif. 2 residues coordinate L-tyrosine: Y170 and Q174. Positions K232–T236 match the 'KMSKS' region motif. An ATP-binding site is contributed by K235. The S4 RNA-binding domain maps to L355–Y421.

The protein belongs to the class-I aminoacyl-tRNA synthetase family. TyrS type 1 subfamily. As to quaternary structure, homodimer.

Its subcellular location is the cytoplasm. The enzyme catalyses tRNA(Tyr) + L-tyrosine + ATP = L-tyrosyl-tRNA(Tyr) + AMP + diphosphate + H(+). Its function is as follows. Catalyzes the attachment of tyrosine to tRNA(Tyr) in a two-step reaction: tyrosine is first activated by ATP to form Tyr-AMP and then transferred to the acceptor end of tRNA(Tyr). In Bacillus subtilis (strain 168), this protein is Tyrosine--tRNA ligase 1.